The chain runs to 94 residues: Large ribosomal subunit protein bL25 (94 aa).

Belongs to the bacterial ribosomal protein bL25 family. In terms of assembly, part of the 50S ribosomal subunit; part of the 5S rRNA/L5/L18/L25 subcomplex. Contacts the 5S rRNA. Binds to the 5S rRNA independently of L5 and L18.

In terms of biological role, this is one of the proteins that binds to the 5S RNA in the ribosome where it forms part of the central protuberance. This chain is Large ribosomal subunit protein bL25, found in Klebsiella pneumoniae subsp. pneumoniae (strain ATCC 700721 / MGH 78578).